Consider the following 208-residue polypeptide: Small ribosomal subunit protein uS4 (208 aa).

In terms of domain architecture, S4 RNA-binding spans 98–160 (RRLDNVVYRL…SKSKTRFVEI (63 aa)).

Belongs to the universal ribosomal protein uS4 family. As to quaternary structure, part of the 30S ribosomal subunit. Contacts protein S5. The interaction surface between S4 and S5 is involved in control of translational fidelity.

In terms of biological role, one of the primary rRNA binding proteins, it binds directly to 16S rRNA where it nucleates assembly of the body of the 30S subunit. With S5 and S12 plays an important role in translational accuracy. This is Small ribosomal subunit protein uS4 from Caldicellulosiruptor bescii (strain ATCC BAA-1888 / DSM 6725 / KCTC 15123 / Z-1320) (Anaerocellum thermophilum).